The following is a 506-amino-acid chain: Dual specificity protein kinase shkC (506 aa).

Residues 1 to 21 are disordered; sequence MDSGLGSSYPEERSGPPEIRP. Positions 10–21 are enriched in basic and acidic residues; sequence PEERSGPPEIRP. The 261-residue stretch at 24-284 folds into the Protein kinase domain; sequence INFEELIGTG…IISALDHVII (261 aa). ATP is bound by residues 30–38 and Lys-51; that span reads IGTGSFGKV. The active-site Proton acceptor is the Asp-147. The region spanning 396–488 is the SH2 domain; it reads WFHGDLDTTE…KLDSQLGVPN (93 aa).

The protein belongs to the protein kinase superfamily. TKL Ser/Thr protein kinase family. SH2 domain-containing protein kinase subfamily.

It is found in the membrane. It carries out the reaction L-seryl-[protein] + ATP = O-phospho-L-seryl-[protein] + ADP + H(+). It catalyses the reaction L-threonyl-[protein] + ATP = O-phospho-L-threonyl-[protein] + ADP + H(+). Required for proper chemotaxis and phagocytosis; proper spatiotemporal control of F-actin levels in chemotaxing cells. Negative regulator of the PI3K (phosphatidylinositol 3 kinase) pathway. Predominantly phosphorylates serines and threonines and tyrosines at a lower level. The chain is Dual specificity protein kinase shkC (shkC) from Dictyostelium discoideum (Social amoeba).